Reading from the N-terminus, the 79-residue chain is Short neurotoxin 6 (79 aa).

The first 21 residues, 1–21 (MKTLLLTLVMVTIMCLDLGYT), serve as a signal peptide directing secretion. Cystine bridges form between C24/C41, C34/C59, C63/C71, and C72/C77.

This sequence belongs to the three-finger toxin family. Short-chain subfamily. Type III alpha-neurotoxin sub-subfamily. Expressed by the venom gland.

The protein resides in the secreted. Its function is as follows. Binds with high affinity to muscle nicotinic acetylcholine receptor (nAChR) and hinders acetylcholine binding to the receptor, thereby impairing neuromuscular transmission. Competes with the binding of alpha-bungarotoxin on muscle AChR (from Torpedo) with an IC(50) of 0.18 uM. Causes muscle paralysis, spasms and increased respiration. In Pseudonaja textilis (Eastern brown snake), this protein is Short neurotoxin 6.